The primary structure comprises 383 residues: Erythronate-4-phosphate dehydrogenase (383 aa).

Substrate-binding residues include Ser45 and Thr66. NAD(+) contacts are provided by residues Asp146, Thr174, 205-207 (ASR), and Asp231. Arg207 is a catalytic residue. Glu236 is a catalytic residue. His253 (proton donor) is an active-site residue. Gly256 contributes to the NAD(+) binding site. Residue Tyr257 coordinates substrate.

The protein belongs to the D-isomer specific 2-hydroxyacid dehydrogenase family. PdxB subfamily. Homodimer.

The protein localises to the cytoplasm. The enzyme catalyses 4-phospho-D-erythronate + NAD(+) = (R)-3-hydroxy-2-oxo-4-phosphooxybutanoate + NADH + H(+). It participates in cofactor biosynthesis; pyridoxine 5'-phosphate biosynthesis; pyridoxine 5'-phosphate from D-erythrose 4-phosphate: step 2/5. In terms of biological role, catalyzes the oxidation of erythronate-4-phosphate to 3-hydroxy-2-oxo-4-phosphonooxybutanoate. In Pseudomonas entomophila (strain L48), this protein is Erythronate-4-phosphate dehydrogenase.